The sequence spans 304 residues: Insulin-like growth factor 1 receptor (304 aa).

Fibronectin type-III domains follow at residues 1 to 43 (ERTV…TMPA) and 49 to 142 (IPGP…VQAK). The Extracellular portion of the chain corresponds to 1 to 147 (ERTVISNLRP…YVQAKTTYEN (147 aa)). 2 N-linked (GlcNAc...) asparagine glycosylation sites follow: N115 and N128. Residues 148–168 (FIHLIIALPVAVLLIVGGLVI) form a helical membrane-spanning segment. The Cytoplasmic portion of the chain corresponds to 169–304 (MLYVFHRKRN…HMNGGRKNER (136 aa)). At S225 the chain carries Phosphoserine; by GSK3-beta. A Phosphoserine modification is found at S229. Residues 231–304 (ENKPPEPEEL…HMNGGRKNER (74 aa)) form a disordered region. A compositionally biased stretch (acidic residues) spans 237-246 (PEELDLEPEN). Residues 247–263 (MESVPLDPSASSSSLPL) are compositionally biased toward low complexity. Residues 264–273 (PDRHSGHKAE) are compositionally biased toward basic and acidic residues.

The protein belongs to the protein kinase superfamily. Tyr protein kinase family. Insulin receptor subfamily. In terms of assembly, tetramer of 2 alpha and 2 beta chains linked by disulfide bonds. The alpha chains contribute to the formation of the ligand-binding domain, while the beta chain carries the kinase domain. Forms a hybrid receptor with INSR, the hybrid is a tetramer consisting of 1 alpha chain and 1 beta chain of INSR and 1 alpha chain and 1 beta chain of IGF1R. Interacts with ARRB1 and ARRB2. Interacts with GRB10. Interacts with RACK1. Interacts with SOCS1, SOCS2 and SOCS3. Interacts with 14-3-3 proteins. Interacts with NMD2. Interacts with MAP3K5. Interacts with STAT3. Found in a ternary complex with IGF1 and ITGAV:ITGB3 or ITGA6:ITGB4. Interacts (nascent precursor form) with ZFAND2B. Post-translationally, autophosphorylated on tyrosine residues in response to ligand binding. Autophosphorylation occurs in trans, i.e. one subunit of the dimeric receptor phosphorylates tyrosine residues on the other subunit. Autophosphorylation occurs in a sequential manner. While every single phosphorylation increases kinase activity, all three tyrosine residues in the kinase activation loop have to be phosphorylated for optimal activity. Can be autophosphorylated at additional tyrosine residues (in vitro). May also be phosphorylated at tyrosine residues by mTORC2. Autophosphorylated is followed by phosphorylation of juxtamembrane tyrosines and C-terminal serines. Phosphorylation of Ser-225 by GSK-3beta restrains kinase activity and promotes cell surface expression, it requires a priming phosphorylation at Ser-229. Dephosphorylated by PTPN1. In terms of processing, polyubiquitinated in the activation loop through both 'Lys-48' and 'Lys-29' linkages, promoting receptor endocytosis and subsequent degradation by the proteasome. Ubiquitination is facilitated by pre-existing phosphorylation. Sumoylated with SUMO1. Post-translationally, controlled by regulated intramembrane proteolysis (RIP). Undergoes metalloprotease-dependent constitutive ectodomain shedding to produce a membrane-anchored 52 kDa C-Terminal fragment which is further processed by presenilin gamma-secretase to yield an intracellular 50 kDa fragment.

The protein localises to the cell membrane. It carries out the reaction L-tyrosyl-[protein] + ATP = O-phospho-L-tyrosyl-[protein] + ADP + H(+). Activated by autophosphorylation at tyrosines in the kinase activation loop; phosphorylation at all three tyrosine residues is required for optimal kinase activity. Inhibited by MSC1609119A-1, BMS-754807, PQIP, benzimidazole pyridinone, isoquinolinedione, bis-azaindole, 3-cyanoquinoline, 2,4-bis-arylamino-1,3-pyrimidine, pyrrolopyrimidine, pyrrole-5-carboxaldehyde, picropodophyllin (PPP), tyrphostin derivatives. While most inhibitors bind to the ATP binding pocket, MSC1609119A-1 functions as allosteric inhibitor and binds close to the DFG motif and the activation loop. Receptor tyrosine kinase which mediates actions of insulin-like growth factor 1 (IGF1). Binds IGF1 with high affinity and IGF2 and insulin (INS) with a lower affinity. The activated IGF1R is involved in cell growth and survival control. IGF1R is crucial for tumor transformation and survival of malignant cell. Ligand binding activates the receptor kinase, leading to receptor autophosphorylation, and tyrosines phosphorylation of multiple substrates, that function as signaling adapter proteins including, the insulin-receptor substrates (IRS1/2), Shc and 14-3-3 proteins. Phosphorylation of IRSs proteins lead to the activation of two main signaling pathways: the PI3K-AKT/PKB pathway and the Ras-MAPK pathway. The result of activating the MAPK pathway is increased cellular proliferation, whereas activating the PI3K pathway inhibits apoptosis and stimulates protein synthesis. Phosphorylated IRS1 can activate the 85 kDa regulatory subunit of PI3K (PIK3R1), leading to activation of several downstream substrates, including protein AKT/PKB. AKT phosphorylation, in turn, enhances protein synthesis through mTOR activation and triggers the antiapoptotic effects of IGFIR through phosphorylation and inactivation of BAD. In parallel to PI3K-driven signaling, recruitment of Grb2/SOS by phosphorylated IRS1 or Shc leads to recruitment of Ras and activation of the ras-MAPK pathway. In addition to these two main signaling pathways IGF1R signals also through the Janus kinase/signal transducer and activator of transcription pathway (JAK/STAT). Phosphorylation of JAK proteins can lead to phosphorylation/activation of signal transducers and activators of transcription (STAT) proteins. In particular activation of STAT3, may be essential for the transforming activity of IGF1R. The JAK/STAT pathway activates gene transcription and may be responsible for the transforming activity. JNK kinases can also be activated by the IGF1R. IGF1 exerts inhibiting activities on JNK activation via phosphorylation and inhibition of MAP3K5/ASK1, which is able to directly associate with the IGF1R. When present in a hybrid receptor with INSR, binds IGF1. This is Insulin-like growth factor 1 receptor (IGF1R) from Sus scrofa (Pig).